A 70-amino-acid chain; its full sequence is Small ribosomal subunit protein bS21B (70 aa).

Belongs to the bacterial ribosomal protein bS21 family.

The polypeptide is Small ribosomal subunit protein bS21B (Rhizobium etli (strain ATCC 51251 / DSM 11541 / JCM 21823 / NBRC 15573 / CFN 42)).